The sequence spans 298 residues: UDP-3-O-acyl-N-acetylglucosamine deacetylase (298 aa).

The Zn(2+) site is built by His-75, His-232, and Asp-236. The Proton donor role is filled by His-259.

Belongs to the LpxC family. Zn(2+) serves as cofactor.

The enzyme catalyses a UDP-3-O-[(3R)-3-hydroxyacyl]-N-acetyl-alpha-D-glucosamine + H2O = a UDP-3-O-[(3R)-3-hydroxyacyl]-alpha-D-glucosamine + acetate. Its pathway is glycolipid biosynthesis; lipid IV(A) biosynthesis; lipid IV(A) from (3R)-3-hydroxytetradecanoyl-[acyl-carrier-protein] and UDP-N-acetyl-alpha-D-glucosamine: step 2/6. Its function is as follows. Catalyzes the hydrolysis of UDP-3-O-myristoyl-N-acetylglucosamine to form UDP-3-O-myristoylglucosamine and acetate, the committed step in lipid A biosynthesis. In Wolinella succinogenes (strain ATCC 29543 / DSM 1740 / CCUG 13145 / JCM 31913 / LMG 7466 / NCTC 11488 / FDC 602W) (Vibrio succinogenes), this protein is UDP-3-O-acyl-N-acetylglucosamine deacetylase.